Reading from the N-terminus, the 326-residue chain is Adenosine receptor A1 (326 aa).

Residues 1-10 (MPPYISAFQA) are Extracellular-facing. Residues 11 to 33 (AYIGIEVLIALVSVPGNVLVIWA) traverse the membrane as a helical segment. Over 34 to 46 (VKVNQALRDATFC) the chain is Cytoplasmic. Residues 47 to 69 (FIVSLAVADVAVGALVIPLAILI) form a helical membrane-spanning segment. The Extracellular segment spans residues 70 to 80 (NIGPQTYFHTC). Cys80 and Cys169 are disulfide-bonded. Residues 81–102 (LMVACPVLILTQSSILALLAIA) form a helical membrane-spanning segment. Residues 103 to 123 (VDRYLRVKIPLRYKTVVTQRR) lie on the Cytoplasmic side of the membrane. The chain crosses the membrane as a helical span at residues 124–146 (AAVAIAGCWILSLVVGLTPMFGW). The Extracellular segment spans residues 147–176 (NNLSVVEQDWRANGSVGEPVIKCEFEKVIS). Residues Asn148 and Asn159 are each glycosylated (N-linked (GlcNAc...) asparagine). The chain crosses the membrane as a helical span at residues 177–201 (MEYMVYFNFFVWVLPPLLLMVLIYL). Residues 202-235 (EVFYLIRKQLNKKVSASSGDPQKYYGKELKIAKS) are Cytoplasmic-facing. A helical transmembrane segment spans residues 236–259 (LALILFLFALSWLPLHILNCITLF). Residues 260–267 (CPTCQKPS) lie on the Extracellular side of the membrane. The helical transmembrane segment at 268–292 (ILIYIAIFLTHGNSAMNPIVYAFRI) threads the bilayer. Residues 293–326 (HKFRVTFLKIWNDHFRCQPKPPIDEDLPEEKAED) are Cytoplasmic-facing. Cys309 carries S-palmitoyl cysteine lipidation.

It belongs to the G-protein coupled receptor 1 family. Widely expressed in brain and spinal cord.

The protein resides in the cell membrane. In terms of biological role, receptor for adenosine. The activity of this receptor is mediated by G proteins which inhibit adenylyl cyclase. The chain is Adenosine receptor A1 (Adora1) from Rattus norvegicus (Rat).